The chain runs to 514 residues: Beta-glucosidase 21 (514 aa).

A signal peptide spans 1 to 25; that stretch reads MERPLHLLLVFLSSPWLLLLQGVSS. A beta-D-glucoside is bound by residues Gln47 and His147. Catalysis depends on Glu193, which acts as the Proton donor. A disulfide bridge links Cys212 with Cys220. Residues Asn219 and Asn224 are each glycosylated (N-linked (GlcNAc...) asparagine). 2 residues coordinate a beta-D-glucoside: Tyr336 and Glu406. Glu406 serves as the catalytic Nucleophile. A glycan (N-linked (GlcNAc...) asparagine) is linked at Asn407. Positions 448 and 465 each coordinate a beta-D-glucoside. Asn494 carries N-linked (GlcNAc...) asparagine glycosylation.

The protein belongs to the glycosyl hydrolase 1 family.

It carries out the reaction Hydrolysis of terminal, non-reducing beta-D-glucosyl residues with release of beta-D-glucose.. The polypeptide is Beta-glucosidase 21 (BGLU21) (Oryza sativa subsp. japonica (Rice)).